We begin with the raw amino-acid sequence, 186 residues long: Trafficking protein particle complex subunit 5 (186 aa).

It belongs to the TRAPP small subunits family. BET3 subfamily. As to quaternary structure, part of the multisubunit TRAPP (transport protein particle) complex.

It localises to the golgi apparatus. It is found in the cis-Golgi network. The protein localises to the endoplasmic reticulum. Its function is as follows. May play a role in vesicular transport from endoplasmic reticulum to Golgi. The chain is Trafficking protein particle complex subunit 5 (trappc5) from Dictyostelium discoideum (Social amoeba).